We begin with the raw amino-acid sequence, 331 residues long: L-lactate dehydrogenase A chain (331 aa).

Residues 29–57 (GMVGMASAISILLKDLCDELAMVDVMEDK) and arginine 98 each bind NAD(+). 3 residues coordinate substrate: arginine 105, asparagine 137, and arginine 168. Position 137 (asparagine 137) interacts with NAD(+). Histidine 192 serves as the catalytic Proton acceptor. Threonine 247 lines the substrate pocket.

This sequence belongs to the LDH/MDH superfamily. LDH family. Homotetramer.

The protein resides in the cytoplasm. The catalysed reaction is (S)-lactate + NAD(+) = pyruvate + NADH + H(+). The protein operates within fermentation; pyruvate fermentation to lactate; (S)-lactate from pyruvate: step 1/1. Interconverts simultaneously and stereospecifically pyruvate and lactate with concomitant interconversion of NADH and NAD(+). The chain is L-lactate dehydrogenase A chain (ldha) from Gobionotothen gibberifrons (Humped rockcod).